A 23-amino-acid polypeptide reads, in one-letter code: Paralytic peptide 1 (23 aa).

A disulfide bond links Cys-7 and Cys-19.

Belongs to the GBP/PSP1/paralytic peptide family. As to expression, hemolymph.

Causes rapid, rigid paralysis when injected into Lepidopteran larvae. The physiological role may be to reduce hemolymph loss following injury and promote wound healing. This is Paralytic peptide 1 from Spodoptera exigua (Beet armyworm).